Here is a 172-residue protein sequence, read N- to C-terminus: Co-chaperone protein HscB homolog (172 aa).

The 73-residue stretch at 2-74 (NHFELFGLVE…LRRAEYLLSL (73 aa)) folds into the J domain.

It belongs to the HscB family. Interacts with HscA and stimulates its ATPase activity.

Its function is as follows. Co-chaperone involved in the maturation of iron-sulfur cluster-containing proteins. Seems to help targeting proteins to be folded toward HscA. The sequence is that of Co-chaperone protein HscB homolog from Aeromonas salmonicida (strain A449).